We begin with the raw amino-acid sequence, 335 residues long: Pro-cathepsin H (335 aa).

An N-terminal signal peptide occupies residues 1–22 (MWATLPLLCAGAWLLGVPVCGA). The propeptide at 23–97 (AELCVNSLEK…AEIKHKYLWS (75 aa)) is activation peptide. Asn101 carries an N-linked (GlcNAc...) asparagine glycan. Cystine bridges form between Cys102–Cys327, Cys138–Cys181, Cys172–Cys214, and Cys272–Cys322. Positions 106–115 (KSNYLRGTGP) are excised as a propeptide. Residue Cys141 is part of the active site. N-linked (GlcNAc...) asparagine glycosylation is present at Asn230. Residues His281 and Asn301 contribute to the active site.

Belongs to the peptidase C1 family. In terms of assembly, composed of a mini chain and a large chain. The large chain may be split into heavy and light chain. All chains are held together by disulfide bonds.

It localises to the lysosome. The catalysed reaction is Hydrolysis of proteins, acting as an aminopeptidase (notably, cleaving Arg-|-Xaa bonds) as well as an endopeptidase.. Its function is as follows. Important for the overall degradation of proteins in lysosomes. In Homo sapiens (Human), this protein is Pro-cathepsin H (CTSH).